The following is a 288-amino-acid chain: NAD(P)H-hydrate epimerase (288 aa).

A mitochondrion-targeting transit peptide spans 1–48 (MSALRALLGLGLLAAGSRLRRVPGRAGACPAGSAWWEARRPHSGGGGE). One can recognise a YjeF N-terminal domain in the interval 65-275 (AQAVDEELFN…ALEKKYQLNL (211 aa)). Residue 119 to 123 (NNGGD) participates in (6S)-NADPHX binding. Position 120 (Asn-120) interacts with K(+). Lys-144 carries the N6-succinyllysine modification. K(+) is bound at residue Asp-185. (6S)-NADPHX is bound by residues 189–195 (GFSFKGD) and Asp-218. Ser-221 is a binding site for K(+).

The protein belongs to the NnrE/AIBP family. Homodimer. Interacts with APOA1 and APOA2. It depends on K(+) as a cofactor. Post-translationally, undergoes physiological phosphorylation during sperm capacitation, downstream to PKA activation.

It is found in the mitochondrion. The protein localises to the secreted. It catalyses the reaction (6R)-NADHX = (6S)-NADHX. It carries out the reaction (6R)-NADPHX = (6S)-NADPHX. Catalyzes the epimerization of the S- and R-forms of NAD(P)HX, a damaged form of NAD(P)H that is a result of enzymatic or heat-dependent hydration. This is a prerequisite for the S-specific NAD(P)H-hydrate dehydratase to allow the repair of both epimers of NAD(P)HX. Accelerates cholesterol efflux from endothelial cells to high-density lipoprotein (HDL) and thereby regulates angiogenesis. The chain is NAD(P)H-hydrate epimerase from Canis lupus familiaris (Dog).